A 947-amino-acid polypeptide reads, in one-letter code: Protein translocase subunit SecA 1 (947 aa).

ATP contacts are provided by residues Q87, 105 to 109 (GEGKT), and D525. Residues 907-937 (DDADKAARDPNRPETWGKVGRNEDCPCNSGK) are disordered. A compositionally biased stretch (basic and acidic residues) spans 908–918 (DADKAARDPNR). Positions 931, 933, 942, and 943 each coordinate Zn(2+).

This sequence belongs to the SecA family. In terms of assembly, monomer and homodimer. Part of the essential Sec protein translocation apparatus which comprises SecA, SecYEG and auxiliary proteins SecDF-YajC and YidC. Zn(2+) is required as a cofactor.

The protein localises to the cell inner membrane. It localises to the cytoplasm. The catalysed reaction is ATP + H2O + cellular proteinSide 1 = ADP + phosphate + cellular proteinSide 2.. In terms of biological role, part of the Sec protein translocase complex. Interacts with the SecYEG preprotein conducting channel. Has a central role in coupling the hydrolysis of ATP to the transfer of proteins into and across the cell membrane, serving both as a receptor for the preprotein-SecB complex and as an ATP-driven molecular motor driving the stepwise translocation of polypeptide chains across the membrane. This is Protein translocase subunit SecA 1 from Rhodopseudomonas palustris (strain BisA53).